Here is a 382-residue protein sequence, read N- to C-terminus: MTDFLPFSRPSMGEEEIAAVAEVLRSGWITTGPKCQQLEQAFCQQVGCRQAIAVSSATGGMHVTLMALGIGPGDEVITPSQTWVSTVNMITLLGAEPVMVDVDRHTLMVRPQDIEAAITPKTKAIIPVHYAGAPADLTALRTLSERYGIPLIEDAAHAVGTQYRDEWIGARGTAIFSFHAIKNITCAEGGMVVTDDEALAERIRSLKFHGLGVDAFDRQRQGRKPQAEVVTPGFKYNLADINAAIALVQLDKLPAINARRQQLAARYLTQLRSLPLQPLAVPDYPHLHAWHLFMVRVDETRCGISRDGLMAALQTHGIGTGLHFRAVHTQKYYRERYPHLHLPETEWNSASLMTLPLFPDMQDSDVDRVVVALTSILESVRD.

Lys-182 bears the N6-(pyridoxal phosphate)lysine mark.

Belongs to the DegT/DnrJ/EryC1 family. ArnB subfamily. As to quaternary structure, homodimer. The cofactor is pyridoxal 5'-phosphate.

The catalysed reaction is UDP-4-amino-4-deoxy-beta-L-arabinose + 2-oxoglutarate = UDP-beta-L-threo-pentopyranos-4-ulose + L-glutamate. It participates in nucleotide-sugar biosynthesis; UDP-4-deoxy-4-formamido-beta-L-arabinose biosynthesis; UDP-4-deoxy-4-formamido-beta-L-arabinose from UDP-alpha-D-glucuronate: step 2/3. Its pathway is bacterial outer membrane biogenesis; lipopolysaccharide biosynthesis. Catalyzes the conversion of UDP-4-keto-arabinose (UDP-Ara4O) to UDP-4-amino-4-deoxy-L-arabinose (UDP-L-Ara4N). The modified arabinose is attached to lipid A and is required for resistance to polymyxin and cationic antimicrobial peptides. The sequence is that of UDP-4-amino-4-deoxy-L-arabinose--oxoglutarate aminotransferase from Pectobacterium carotovorum subsp. carotovorum (strain PC1).